We begin with the raw amino-acid sequence, 741 residues long: Alpha-1,6-mannosylglycoprotein 6-beta-N-acetylglucosaminyltransferase A (741 aa).

Topologically, residues 1–13 are cytoplasmic; sequence MALFTPWKLSSQK. A helical; Signal-anchor for type II membrane protein transmembrane segment spans residues 14 to 30; sequence LGFFLVTFGFIWGMMLL. Residues 31-741 are Lumenal-facing; sequence HFTIQQRTQP…GQVALCKDCL (711 aa). Residues Asn110, Asn115, and Asn118 are each glycosylated (N-linked (GlcNAc...) asparagine). 9 cysteine pairs are disulfide-bonded: Cys145/Cys183, Cys156/Cys196, Cys172/Cys338, Cys372/Cys626, Cys649/Cys724, Cys653/Cys726, Cys660/Cys713, Cys681/Cys702, and Cys737/Cys740. The tract at residues 213–741 is sufficient for catalytic activity; that stretch reads NSLAEIRTDF…GQVALCKDCL (529 aa). Positions 264 to 269 are important for activity in FGF2 release; that stretch reads KRKRKK. N-linked (GlcNAc...) asparagine glycosylation occurs at Asn334. 378 to 379 provides a ligand contact to substrate; it reads DS. N-linked (GlcNAc...) asparagine glycans are attached at residues Asn433 and Asn447. Glu526 is a binding site for UDP-N-acetyl-alpha-D-glucosamine. Lys554 is a binding site for substrate.

Belongs to the glycosyltransferase 18 family. In terms of processing, N-glycosylated. A secreted form is released from the membrane after cleavage by gamma-secretase.

Its subcellular location is the golgi apparatus membrane. The protein localises to the secreted. The catalysed reaction is N(4)-{beta-D-GlcNAc-(1-&gt;2)-[beta-D-GlcNAc-(1-&gt;4)]-alpha-D-Man-(1-&gt;3)-[beta-D-GlcNAc-(1-&gt;2)-alpha-D-Man-(1-&gt;6)]-beta-D-Man-(1-&gt;4)-beta-D-GlcNAc-(1-&gt;4)-beta-D-GlcNAc}-L-asparaginyl-[protein] + UDP-N-acetyl-alpha-D-glucosamine = N(4)-{beta-D-GlcNAc-(1-&gt;2)-[beta-D-GlcNAc-(1-&gt;4)]-alpha-D-Man-(1-&gt;3)-[beta-D-GlcNAc-(1-&gt;2)-[beta-D-GlcNAc-(1-&gt;6)]-alpha-D-Man-(1-&gt;6)]-beta-D-Man-(1-&gt;4)-beta-D-GlcNAc-(1-&gt;4)-beta-D-GlcNAc}-L-asparaginyl-[protein] + UDP + H(+). It participates in protein modification; protein glycosylation. Its activity is regulated as follows. Activity is increased by Mn(2+) and Mg(2+). In terms of biological role, catalyzes the addition of N-acetylglucosamine (GlcNAc) in beta 1-6 linkage to the alpha-linked mannose of biantennary N-linked oligosaccharides. Catalyzes an important step in the biosynthesis of branched, complex-type N-glycans, such as those found on EGFR, TGFR (TGF-beta receptor) and CDH2. Via its role in the biosynthesis of complex N-glycans, plays an important role in the activation of cellular signaling pathways, reorganization of the actin cytoskeleton, cell-cell adhesion and cell migration. MGAT5-dependent EGFR N-glycosylation enhances the interaction between EGFR and LGALS3 and thereby prevents rapid EGFR endocytosis and prolongs EGFR signaling. Required for efficient interaction between TGFB1 and its receptor. Enhances activation of intracellular signaling pathways by several types of growth factors, including FGF2, PDGF, IGF, TGFB1 and EGF. MGAT5-dependent CDH2 N-glycosylation inhibits CDH2-mediated homotypic cell-cell adhesion and contributes to the regulation of downstream signaling pathways. Promotes cell migration. Contributes to the regulation of the inflammatory response. MGAT5-dependent TCR N-glycosylation enhances the interaction between TCR and LGALS3, limits agonist-induced TCR clustering, and thereby dampens TCR-mediated responses to antigens. Required for normal leukocyte evasation and accumulation at sites of inflammation. Inhibits attachment of monocytes to the vascular endothelium and subsequent monocyte diapedesis. Its function is as follows. Promotes proliferation of umbilical vein endothelial cells and angiogenesis, at least in part by promoting the release of the growth factor FGF2 from the extracellular matrix. The polypeptide is Alpha-1,6-mannosylglycoprotein 6-beta-N-acetylglucosaminyltransferase A (MGAT5) (Homo sapiens (Human)).